The primary structure comprises 824 residues: C-Jun-amino-terminal kinase-interacting protein 2 (824 aa).

Disordered stretches follow at residues 1–28, 40–160, 172–349, and 361–501; these read MADR…QDIS, ITDD…GFDL, CSPA…DSPW, and EGSS…APRD. Acidic residues predominate over residues 77-110; that stretch reads DFQEFEMIDDNEEEDDEDEEEEEEEEEGDGEGQE. Residues 110 to 275 form a JNK-binding domain (JBD) region; that stretch reads EGGDPGSEAP…RMISSISETE (166 aa). A compositionally biased stretch (polar residues) spans 141 to 156; sequence LRLTTLGAQDSLNNNG. Residues 239–498 are necessary for interaction with FGF13; sequence GRGGRRSSQE…PGGRGTGPSA (260 aa). Serine 254, serine 302, and serine 305 each carry phosphoserine. The span at 268 to 305 shows a compositional bias: low complexity; that stretch reads ISSISETELELSSDGGSSSSGRSSHLTNSIEEASSPAS. The span at 327-346 shows a compositional bias: acidic residues; the sequence is TNSEYESGSESEPDLSEDAD. The span at 416-432 shows a compositional bias: pro residues; it reads APPPPAPAAPRPGPAQP. The segment covering 451-467 has biased composition (low complexity); the sequence is AAPGRAARPGRACSAAC. Residues 468–484 are compositionally biased toward acidic residues; that stretch reads SEEEDEEDDEEEEDAED. The SH3 domain occupies 604–665; sequence EREQTHRAVF…PAFYAHAVPG (62 aa). Positions 677–813 constitute a PID domain; sequence PCWVERFDVQ…FLEYYQEHLA (137 aa).

This sequence belongs to the JIP scaffold family. In terms of assembly, forms homo- or heterooligomeric complexes. Binds specific components of the JNK signaling pathway namely JNK1, JNK2, JNK3, MAP2K7, MAP3K10, MAP3K11, MAP3K12 and MAPK13. Also binds the proline-rich domain-containing splice variant of apolipoprotein E receptor 2 (ApoER2). Binds the cytoplasmic tails of LRP1 and LRP2 (Megalin). Binds the TPR motif-containing C-terminal of kinesin light chain, Klc1, pre-assembled MAPK8IP1 scaffolding complexes are then transported as a cargo of kinesin, to the required subcellular location. Interacts with the cytoplasmic domain of APP. Interacts with DCLK2. Interacts with TIAM1 and TIAM2. Interacts with FGF13; enables the interaction with MAPK13 and may regulate the MAPK8IP2 scaffolding activity. Interacts with SH3RF2. As to expression, expressed mainly in the brain and pancreas, including insulin-secreting cells. In the nervous system, more abundantly expressed in the cerebellum, pituitary gland, occipital lobe and the amygdala. Also expressed in fetal brain. Very low levels found in uterus, ovary, prostate, colon, testis, adrenal gland, thyroid gland and salivary gland.

It is found in the cytoplasm. The JNK-interacting protein (JIP) group of scaffold proteins selectively mediates JNK signaling by aggregating specific components of the MAPK cascade to form a functional JNK signaling module. JIP2 inhibits IL1 beta-induced apoptosis in insulin-secreting cells. May function as a regulator of vesicle transport, through interactions with the JNK-signaling components and motor proteins. The protein is C-Jun-amino-terminal kinase-interacting protein 2 (MAPK8IP2) of Homo sapiens (Human).